Consider the following 586-residue polypeptide: Urease subunit alpha (586 aa).

The Urease domain maps to 134-586; it reads GAIDTHIHFI…LPMAQRYFLF (453 aa). Residues His-139, His-141, and Lys-222 each coordinate Ni(2+). The residue at position 222 (Lys-222) is an N6-carboxylysine. His-224 lines the substrate pocket. 2 residues coordinate Ni(2+): His-251 and His-277. His-325 functions as the Proton donor in the catalytic mechanism. Position 365 (Asp-365) interacts with Ni(2+).

Belongs to the metallo-dependent hydrolases superfamily. Urease alpha subunit family. Heterotrimer of UreA (gamma), UreB (beta) and UreC (alpha) subunits. Three heterotrimers associate to form the active enzyme. Ni cation is required as a cofactor. Post-translationally, carboxylation allows a single lysine to coordinate two nickel ions.

Its subcellular location is the cytoplasm. The catalysed reaction is urea + 2 H2O + H(+) = hydrogencarbonate + 2 NH4(+). It participates in nitrogen metabolism; urea degradation; CO(2) and NH(3) from urea (urease route): step 1/1. The sequence is that of Urease subunit alpha from Gloeothece citriformis (strain PCC 7424) (Cyanothece sp. (strain PCC 7424)).